A 687-amino-acid chain; its full sequence is A-kinase anchor protein 8 (687 aa).

The interaction with MCM2 stretch occupies residues 1 to 195 (MEQGYGGYGA…FLRGRGQGRF (195 aa)). The interval 1–210 (MEQGYGGYGA…SSTFIRSDPF (210 aa)) is interaction with DPY30. Phosphoserine is present on Ser-72. Disordered regions lie at residues 105 to 124 (KEGG…DRDS) and 185 to 218 (GFLR…ASEP). Arg-109 is subject to Asymmetric dimethylarginine; alternate. Arg-109 carries the post-translational modification Omega-N-methylarginine; alternate. Over residues 109–118 (RGGISSGGEG) the composition is skewed to gly residues. The segment at 109-201 (RGGISSGGEG…QGRFQDRSNS (93 aa)) is interaction with DDX5. Residue Ser-199 is modified to Phosphoserine. An omega-N-methylarginine mark is found at Arg-232 and Arg-276. The interval 277 to 379 (SQTRIRDWPR…KQRRRDRMRD (103 aa)) is disordered. Composition is skewed to basic and acidic residues over residues 280–294 (RIRD…ERFG) and 311–320 (PDAKLARADS). The Bipartite nuclear localization signal signature appears at 286-303 (RRRGFERFGPDNMGRKRK). A Glycyl lysine isopeptide (Lys-Gly) (interchain with G-Cter in SUMO2) cross-link involves residue Lys-314. A phosphoserine mark is found at Ser-320, Ser-325, and Ser-336. Over residues 321-331 (DGDLSENDDGA) the composition is skewed to acidic residues. Over residues 335–357 (RSGDEEFRGEDDLCDSRKQRGEK) the composition is skewed to basic and acidic residues. The tract at residues 384-447 (RIQFACSVCK…NKKIEKRRQE (64 aa)) is involved in chromatin-binding. 2 consecutive C2H2 AKAP95-type zinc fingers follow at residues 389–411 (CSVC…SKFH) and 478–501 (CLAC…SVDH). An involved in condensin complex recruitment region spans residues 522-565 (SVLNNKHIVKMLEKYLKGEDPFVNETADLETEGDENVGEEKEET). Residue Thr-552 is modified to Phosphothreonine. The segment at 568–585 (EVAAEVLAEVITAAVKAV) is RII-binding. Positions 572 to 589 (EVLAEVITAAVKAVEGEG) are required for interaction with MYCBP. Residues 624 to 659 (QTCEAASETRSIEDKTRGEAAEARNEAAMPTADAGS) form a disordered region. Basic and acidic residues predominate over residues 633 to 648 (RSIEDKTRGEAAEARN). Ser-659 carries the post-translational modification Phosphoserine.

Belongs to the AKAP95 family. In terms of assembly, binds to the PKA RII-alpha regulatory subunit PRKAR2A. Interacts (via C-terminus) with FIGN. Interacts with NCAPD2, CCND3, CCNE1, MCM2, RPS6KA1, DDX5, PDE4A. Interacts with MYCBP; MYCBP is translocated to the nucleus and the interaction prevents the association of the PKA catalytic subunit leading to suppression of PKA activity. Interacts with CCND1, CASP3. Interacts with NFKB1; detetcted in the cytoplasm. Interacts with DPY30; mediating AKAP8 association with at least the MLL4/WBP7 HMT complex. Interacts with HDAC3; increased during mitosis. Interacts with GJA1; in the nucleus and in the nuclear membrane; the nuclear association increases with progress of cell cycle G1, S and G2 phase and decreases in M phase. In terms of processing, phosphorylated on tyrosine residues probably by SRC subfamily protein kinases; multiple phosphorylation is leading to dissociation from nuclear structures implicated in chromatin structural changes.

It localises to the nucleus matrix. It is found in the nucleus. The protein resides in the nucleolus. Its subcellular location is the cytoplasm. In terms of biological role, anchoring protein that mediates the subcellular compartmentation of cAMP-dependent protein kinase (PKA type II). Acts as an anchor for a PKA-signaling complex onto mitotic chromosomes, which is required for maintenance of chromosomes in a condensed form throughout mitosis. Recruits condensin complex subunit NCAPD2 to chromosomes required for chromatin condensation; the function appears to be independent from PKA-anchoring. Specifically involved in recruitment of CAPD2 to, and condensation of maternal but not paternal chromosomes. May help to deliver cyclin D/E to CDK4 to facilitate cell cycle progression. Required for cell cycle G2/M transition and histone deacetylation during mitosis. In mitotic cells recruits HDAC3 to the vicinity of chromatin leading to deacetylation and subsequent phosphorylation at 'Ser-10' of histone H3; in this function may act redundantly with AKAP8L. Involved in nuclear retention of RPS6KA1 upon ERK activation thus inducing cell proliferation. May be involved in regulation of DNA replication by acting as scaffold for MCM2. Enhances HMT activity of the KMT2 family MLL4/WBP7 complex and is involved in transcriptional regulation. In a teratocarcinoma cell line is involved in retinoic acid-mediated induction of developmental genes implicating H3 'Lys-4' methylation. May be involved in recruitment of active CASP3 to the nucleus in apoptotic cells. May act as a carrier protein of GJA1 for its transport to the nucleus. May play a repressive role in the regulation of rDNA transcription. Preferentially binds GC-rich DNA in vitro. In cells, associates with ribosomal RNA (rRNA) chromatin, preferentially with rRNA promoter and transcribed regions. Involved in modulation of Toll-like receptor signaling. Required for the cAMP-dependent suppression of TNF-alpha in early stages of LPS-induced macrophage activation; the function probably implicates targeting of PKA to NFKB1. This chain is A-kinase anchor protein 8 (Akap8), found in Mus musculus (Mouse).